A 1087-amino-acid chain; its full sequence is Alpha-mannosidase G (1087 aa).

Residues His-264, Asp-266, Asp-376, and His-579 each contribute to the Zn(2+) site. Asp-376 serves as the catalytic Nucleophile.

The protein belongs to the glycosyl hydrolase 38 family. Zn(2+) is required as a cofactor.

It catalyses the reaction Hydrolysis of terminal, non-reducing alpha-D-mannose residues in alpha-D-mannosides.. The chain is Alpha-mannosidase G (manG) from Dictyostelium discoideum (Social amoeba).